The following is a 116-amino-acid chain: Large ribosomal subunit protein bL19 (116 aa).

Belongs to the bacterial ribosomal protein bL19 family.

Its function is as follows. This protein is located at the 30S-50S ribosomal subunit interface and may play a role in the structure and function of the aminoacyl-tRNA binding site. The protein is Large ribosomal subunit protein bL19 of Pseudothermotoga lettingae (strain ATCC BAA-301 / DSM 14385 / NBRC 107922 / TMO) (Thermotoga lettingae).